Here is a 353-residue protein sequence, read N- to C-terminus: Fasciclin-like arabinogalactan protein 21 (353 aa).

An N-terminal signal peptide occupies residues Met1 to Arg28. 6 N-linked (GlcNAc...) asparagine glycosylation sites follow: Asn51, Asn81, Asn94, Asn200, Asn249, and Asn315. The FAS1 1 domain maps to Thr83 to Leu181. Residues Thr254–His352 form the FAS1 2 domain.

Belongs to the fasciclin-like AGP family.

The protein resides in the secreted. Functionally, may be a cell surface adhesion protein. In Arabidopsis thaliana (Mouse-ear cress), this protein is Fasciclin-like arabinogalactan protein 21 (FLA21).